Reading from the N-terminus, the 385-residue chain is 1-deoxy-D-xylulose 5-phosphate reductoisomerase (385 aa).

NADPH contacts are provided by threonine 10, glycine 11, serine 12, isoleucine 13, lysine 37, and asparagine 124. 1-deoxy-D-xylulose 5-phosphate is bound at residue lysine 125. Glutamate 126 serves as a coordination point for NADPH. Aspartate 150 is a binding site for Mn(2+). The 1-deoxy-D-xylulose 5-phosphate site is built by serine 151, glutamate 152, serine 176, and histidine 199. Glutamate 152 is a Mn(2+) binding site. Glycine 205 contacts NADPH. The 1-deoxy-D-xylulose 5-phosphate site is built by serine 212, asparagine 217, lysine 218, and glutamate 221. Glutamate 221 provides a ligand contact to Mn(2+).

Belongs to the DXR family. Mg(2+) is required as a cofactor. It depends on Mn(2+) as a cofactor.

It catalyses the reaction 2-C-methyl-D-erythritol 4-phosphate + NADP(+) = 1-deoxy-D-xylulose 5-phosphate + NADPH + H(+). It participates in isoprenoid biosynthesis; isopentenyl diphosphate biosynthesis via DXP pathway; isopentenyl diphosphate from 1-deoxy-D-xylulose 5-phosphate: step 1/6. Its function is as follows. Catalyzes the NADPH-dependent rearrangement and reduction of 1-deoxy-D-xylulose-5-phosphate (DXP) to 2-C-methyl-D-erythritol 4-phosphate (MEP). This chain is 1-deoxy-D-xylulose 5-phosphate reductoisomerase, found in Clostridium botulinum (strain ATCC 19397 / Type A).